The primary structure comprises 453 residues: Glutamyl-tRNA(Gln) amidotransferase subunit A (453 aa).

Catalysis depends on charge relay system residues Lys53 and Ser128. Residue Ser152 is the Acyl-ester intermediate of the active site.

Belongs to the amidase family. GatA subfamily. In terms of assembly, heterotrimer of A, B and C subunits.

The enzyme catalyses L-glutamyl-tRNA(Gln) + L-glutamine + ATP + H2O = L-glutaminyl-tRNA(Gln) + L-glutamate + ADP + phosphate + H(+). Its function is as follows. Allows the formation of correctly charged Gln-tRNA(Gln) through the transamidation of misacylated Glu-tRNA(Gln) in organisms which lack glutaminyl-tRNA synthetase. The reaction takes place in the presence of glutamine and ATP through an activated gamma-phospho-Glu-tRNA(Gln). This is Glutamyl-tRNA(Gln) amidotransferase subunit A from Helicobacter pylori (strain G27).